The following is a 394-amino-acid chain: Protein TsgA homolog (394 aa).

The next 12 membrane-spanning stretches (helical) occupy residues 11 to 31, 51 to 71, 76 to 96, 101 to 121, 134 to 154, 160 to 180, 206 to 226, 246 to 266, 274 to 294, 297 to 317, 334 to 354, and 363 to 383; these read WISF…GMVM, FLNT…EIIP, LVFG…GHNL, ACMF…TFLI, LLFT…IAAT, VAWY…FILT, IGVL…LGFI, GLVS…SVAL, IVTV…SSQQ, MLSM…TTLI, FILT…GPIV, and LATA…LGFV.

This sequence belongs to the major facilitator superfamily. TsgA family.

It localises to the cell inner membrane. The protein is Protein TsgA homolog of Edwardsiella ictaluri (strain 93-146).